A 208-amino-acid chain; its full sequence is Imidazoleglycerol-phosphate dehydratase (208 aa).

This sequence belongs to the imidazoleglycerol-phosphate dehydratase family.

The protein resides in the cytoplasm. It carries out the reaction D-erythro-1-(imidazol-4-yl)glycerol 3-phosphate = 3-(imidazol-4-yl)-2-oxopropyl phosphate + H2O. It participates in amino-acid biosynthesis; L-histidine biosynthesis; L-histidine from 5-phospho-alpha-D-ribose 1-diphosphate: step 6/9. The sequence is that of Imidazoleglycerol-phosphate dehydratase from Prochlorococcus marinus (strain MIT 9211).